The primary structure comprises 221 residues: MLDVVKGNLIVSCQALSDEPLHSSFIMGRMAIAAKQGGAAAIRAQGIDDINEIKEVTKLPIIGIIKRNYDDSEIYITPTMKEVDELLKTDCEMIALDATKRKRPNGENIKDLVDAIHAKGRLAMADISTLEEGIEAEKLGFDCVSTTLSGYTPYSKQSNSVDFELLEELVKTVKIPVICEGRINTPEELKKALDLGAYSAVVGGAITRPQQITKRFTDILK.

Belongs to the NanE family.

The catalysed reaction is an N-acyl-D-glucosamine 6-phosphate = an N-acyl-D-mannosamine 6-phosphate. Its pathway is amino-sugar metabolism; N-acetylneuraminate degradation; D-fructose 6-phosphate from N-acetylneuraminate: step 3/5. In terms of biological role, converts N-acetylmannosamine-6-phosphate (ManNAc-6-P) to N-acetylglucosamine-6-phosphate (GlcNAc-6-P). This Clostridium perfringens (strain SM101 / Type A) protein is Putative N-acetylmannosamine-6-phosphate 2-epimerase.